The chain runs to 283 residues: Pantothenate synthetase (283 aa).

ATP is bound at residue Met26 to His33. His33 acts as the Proton donor in catalysis. Position 57 (Gln57) interacts with (R)-pantoate. Gln57 serves as a coordination point for beta-alanine. Gly144–Asp147 is an ATP binding site. Residue Gln150 participates in (R)-pantoate binding. Residues Leu173 and Met181–Arg184 contribute to the ATP site.

It belongs to the pantothenate synthetase family. As to quaternary structure, homodimer.

Its subcellular location is the cytoplasm. The enzyme catalyses (R)-pantoate + beta-alanine + ATP = (R)-pantothenate + AMP + diphosphate + H(+). It functions in the pathway cofactor biosynthesis; (R)-pantothenate biosynthesis; (R)-pantothenate from (R)-pantoate and beta-alanine: step 1/1. Functionally, catalyzes the condensation of pantoate with beta-alanine in an ATP-dependent reaction via a pantoyl-adenylate intermediate. This is Pantothenate synthetase from Thiobacillus denitrificans (strain ATCC 25259 / T1).